The sequence spans 464 residues: UDP-N-acetylmuramoylalanine--D-glutamate ligase (464 aa).

127-133 (GSNGKST) serves as a coordination point for ATP.

It belongs to the MurCDEF family.

Its subcellular location is the cytoplasm. It catalyses the reaction UDP-N-acetyl-alpha-D-muramoyl-L-alanine + D-glutamate + ATP = UDP-N-acetyl-alpha-D-muramoyl-L-alanyl-D-glutamate + ADP + phosphate + H(+). It participates in cell wall biogenesis; peptidoglycan biosynthesis. In terms of biological role, cell wall formation. Catalyzes the addition of glutamate to the nucleotide precursor UDP-N-acetylmuramoyl-L-alanine (UMA). The protein is UDP-N-acetylmuramoylalanine--D-glutamate ligase of Dinoroseobacter shibae (strain DSM 16493 / NCIMB 14021 / DFL 12).